A 565-amino-acid chain; its full sequence is Adenine deaminase (565 aa).

It belongs to the metallo-dependent hydrolases superfamily. Adenine deaminase family. Requires Mn(2+) as cofactor.

It carries out the reaction adenine + H2O + H(+) = hypoxanthine + NH4(+). This is Adenine deaminase from Sinorhizobium fredii (strain NBRC 101917 / NGR234).